Reading from the N-terminus, the 228-residue chain is NAD(P)H-hydrate epimerase (228 aa).

The YjeF N-terminal domain maps to 9-214; that stretch reads AQNIDQELFN…DLLLKKYELE (206 aa). A (6S)-NADPHX-binding site is contributed by 60-64; that stretch reads NNGGD. K(+)-binding residues include Asn-61 and Asp-125. Residues 129–135 and Asp-158 contribute to the (6S)-NADPHX site; that span reads GFSFKGE. Ser-161 contributes to the K(+) binding site.

It belongs to the NnrE/AIBP family. K(+) is required as a cofactor.

It carries out the reaction (6R)-NADHX = (6S)-NADHX. The enzyme catalyses (6R)-NADPHX = (6S)-NADPHX. In terms of biological role, catalyzes the epimerization of the S- and R-forms of NAD(P)HX, a damaged form of NAD(P)H that is a result of enzymatic or heat-dependent hydration. This is a prerequisite for the S-specific NAD(P)H-hydrate dehydratase to allow the repair of both epimers of NAD(P)HX. The protein is NAD(P)H-hydrate epimerase of Nematostella vectensis (Starlet sea anemone).